The following is a 1960-amino-acid chain: Myosin-9 (1960 aa).

N-acetylalanine is present on Ala2. Positions 2-838 (AQQAADKYLY…RLFTKVKPLL (837 aa)) are mediates interaction with LIMCH1. Lys8 is subject to N6-acetyllysine. Position 11 is a phosphotyrosine (Tyr11). The 51-residue stretch at 27-77 (AAKKLVWVPSSKNGFEPASLKEEVGEEAIVELVENGKKVKVNKDDIQKMNP) folds into the Myosin N-terminal SH3-like domain. Residues 81–776 (SKVEDMAELT…VLAHLEEERD (696 aa)) form the Myosin motor domain. Lys102 carries the post-translational modification N6-acetyllysine. 174–181 (GESGAGKT) serves as a coordination point for ATP. N6-acetyllysine occurs at positions 299, 435, and 613. Phosphoserine is present on Ser628. Residues 654–676 (LAKLMATLRNTNPNFVRCIIPNH) form an actin-binding region. Tyr754 bears the Phosphotyrosine mark. The region spanning 779–808 (ITDVIIGFQACCRGYLARKAFAKRQQQLTA) is the IQ domain. A coiled-coil region spans residues 841-1926 (IRHEDELLAK…LKNKLRRGDL (1086 aa)). An N6-succinyllysine modification is found at Lys850. 3 positions are modified to N6-acetyllysine: Lys860, Lys975, and Lys1024. Residues 1035–1055 (RLRREEKQRQELEKTRRKLEG) are compositionally biased toward basic and acidic residues. Residues 1035–1057 (RLRREEKQRQELEKTRRKLEGDS) form a disordered region. Ser1114 bears the Phosphoserine mark. The segment at 1117–1167 (QEDLESERASRNKAEKQKRDLGEELEALKTELEDTLDSTAAQQELRSKREQ) is disordered. Residues 1122–1148 (SERASRNKAEKQKRDLGEELEALKTEL) show a composition bias toward basic and acidic residues. N6-acetyllysine is present on residues Lys1234 and Lys1249. The segment at 1327–1352 (LSTKLKQMEDEKNSFREQLEEEEEAK) is disordered. Positions 1332-1352 (KQMEDEKNSFREQLEEEEEAK) are enriched in basic and acidic residues. Residues Lys1357, Lys1392, Lys1404, Lys1410, Lys1459, and Lys1638 each carry the N6-acetyllysine modification. The residue at position 1669 (Lys1669) is an N6-succinyllysine. Position 1714 is a phosphoserine (Ser1714). The segment at 1768–1788 (LERSHAQKNENARQQLERQNK) is disordered. N6-acetyllysine occurs at positions 1793, 1802, and 1845. Positions 1877–1908 (RQLEEAEEEAQRANASRRKLQRELEDATETAD) are disordered. Arg1923 is modified (omega-N-methylarginine). Thr1939 is subject to Phosphothreonine. Residues 1939–1960 (TGDCSDEEVDGKADGADAKAAE) form a disordered region. At Ser1943 the chain carries Phosphoserine. Over residues 1948–1960 (DGKADGADAKAAE) the composition is skewed to basic and acidic residues.

The protein belongs to the TRAFAC class myosin-kinesin ATPase superfamily. Myosin family. In terms of assembly, myosin is a hexameric protein that consists of 2 heavy chain subunits (MHC), 2 alkali light chain subunits (MLC) and 2 regulatory light chain subunits (MLC-2). Interacts with RASIP1. Interacts with DDR1. Interacts with PDLIM2. Interacts with SVIL. Interacts with HTRA3. Interacts with Myo7a. Interacts with CFAP95. Interacts with LIMCH1; independently of the integration of MYH9 into the myosin complex. Interacts with RAB3A. Interacts with ZBED4. Interacts with S100A4; this interaction increases cell motility. In terms of processing, ISGylated. Post-translationally, ubiquitination.

It is found in the cytoplasm. It localises to the cytoskeleton. The protein localises to the cell cortex. Its subcellular location is the cytoplasmic vesicle. The protein resides in the secretory vesicle. It is found in the cortical granule. Its function is as follows. Cellular myosin that appears to play a role in cytokinesis, cell shape, and specialized functions such as secretion and capping. Required for cortical actin clearance prior to oocyte exocytosis. Promotes cell motility in conjunction with S100A4. During cell spreading, plays an important role in cytoskeleton reorganization, focal contact formation (in the margins but not the central part of spreading cells), and lamellipodial retraction; this function is mechanically antagonized by MYH10. This chain is Myosin-9 (Myh9), found in Mus musculus (Mouse).